The sequence spans 1128 residues: Testis-expressed protein 2 (1128 aa).

3 disordered regions span residues 1–28 (MTSL…VQRS), 71–99 (AKED…GLSV), and 130–279 (PLAL…FFKV). Residues 130–186 (PLALSPGSSSSGPLASSPSVSSLSEQKTSSSSPLSSPSKSPVLSSSASSSALSSAKP) are compositionally biased toward low complexity. Ser-195 carries the phosphoserine modification. Positions 248-274 (QFTQPRNTGGDSKTAPSSPLTSPSDTR) are enriched in polar residues. A Phosphothreonine modification is found at Thr-261. A phosphoserine mark is found at Ser-264, Ser-265, Ser-269, and Ser-294. The segment at 345–387 (KEEEGDSEGEGYGSDSNTSRSDHLKPTEDASKEVEPKGSQASS) is disordered. Residues 364 to 380 (RSDHLKPTEDASKEVEP) show a composition bias toward basic and acidic residues. The next 2 helical transmembrane spans lie at 473–493 (TLGF…PYYM) and 495–515 (GLFL…WFFT). Asn-593 carries N-linked (GlcNAc...) asparagine glycosylation. Residues 645–671 (SKAQSDKEATEEKPPPEKELPSEDLKK) show a composition bias toward basic and acidic residues. Disordered stretches follow at residues 645 to 688 (SKAQ…DPIL), 716 to 765 (RKPA…QKEL), 787 to 821 (QDNR…EEEQ), and 945 to 981 (ADSD…GYVG). A phosphoserine mark is found at Ser-733, Ser-739, Ser-745, Ser-749, Ser-752, Ser-799, and Ser-816. Over residues 736–751 (SSPSGHLSHSRSSSKG) the composition is skewed to low complexity. Residues 796–806 (PVQSAESSPTA) are compositionally biased toward polar residues. One can recognise an SMP-LTD domain in the interval 817–1102 (EEEEQEAWVN…MPNMDDVYIP (286 aa)). Positions 946-963 (DSDEESSSAGSSEEDDPP) are enriched in acidic residues.

It is found in the endoplasmic reticulum membrane. Its subcellular location is the nucleus membrane. Its function is as follows. During endoplasmic reticulum (ER) stress or when cellular ceramide levels increase, may induce contacts between the ER and medial-Golgi complex to facilitate non-vesicular transport of ceramides from the ER to the Golgi complex where they are converted to complex sphingolipids, preventing toxic ceramide accumulation. The chain is Testis-expressed protein 2 (Tex2) from Mus musculus (Mouse).